The primary structure comprises 472 residues: MFRTILLCSLGLTTLSSAATHNITSIFSSSLSPGAQIFLPSDTNYTEDVTQRWTTYDAPTYIGAIKPATVKDIQNIVTLAASNKIPFLATAGGHGATITYVNCTNGIEIDISNFNTVSIDASNNTMTVGGAVRFEDIIPPLYEAGKELPTGTAPCVGLVGATIGGGIGNLQGLHGLILDSLLSVELVTPSGDVLTVSTSENADLFWAIRGAGANFGIITSATYKIYNATNNGLAMSANYLFPASENRSVWEIFQSFDETLPPELSLTAYSGFNQTTQEMELIVNAIYYGPKEEGVSYLTNFAALNATETNLMMVAWPNVTSSMAFGADGDACTTGSYLNTWGLGLAETNIDTYTTFFNELQAFSQAHPDYSGIFVVDRYSSAAAAAVPANSTSYGYGYRNINSHLLFENSYPSDNSTLDNAVNSFMRSIRSQFQRTSGFSEMEIYLNYAHGDEGADVWYSPQHLPKLSQLKS.

Positions 1–18 are cleaved as a signal peptide; that stretch reads MFRTILLCSLGLTTLSSA. Residues asparagine 22, asparagine 44, asparagine 102, asparagine 123, asparagine 227, asparagine 246, asparagine 273, asparagine 305, asparagine 318, asparagine 390, and asparagine 415 are each glycosylated (N-linked (GlcNAc...) asparagine). Residues 54–228 form the FAD-binding PCMH-type domain; it reads TTYDAPTYIG…TSATYKIYNA (175 aa).

This sequence belongs to the oxygen-dependent FAD-linked oxidoreductase family.

It functions in the pathway secondary metabolite biosynthesis. Its function is as follows. FAD-linked oxidoreductase; part of the gene cluster that mediates the biosynthesis of azaphilones, a class of fungal metabolites characterized by a highly oxygenated pyrano-quinone bicyclic core and exhibiting a broad range of bioactivities. In the first step, the non-reducing polyketide synthase azaA forms the hexaketide precursor from successive condensations of five malonyl-CoA units, presumably with a simple acetyl-CoA starter unit. The reactive polyketide chain then undergoes a PT-mediated C2-C7 cyclization to afford the aromatic ring and is eventually released as an aldehyde through the R-domain. The putative ketoreductase azaE is proposed to catalyze the reduction of the terminal ketone resulting in the early culture product FK17-P2a. The monooxygenase azaH was demonstrated to be the only enzyme required to convert FK17-P2a to azanigerone E. AzaH first hydroxylates the benzaldehyde intermediate FK17-P2a at C4, which triggers the formation of the pyran-ring to afford azanigerone E. In parallel, the 2,4-dimethylhexanoyl chain is synthesized by the HR-PKS azaB and is proposed to be transferred to the C4-hydroxyl of azanigerone E by the acyltransferase azaD directly from the ACP domain of azaB. Alternatively, the 2,4-dimethyl-hexanoyl chain may be offloaded from the HR-PKS as a carboxylic acid and converted to an acyl-CoA by azaF. The resulting acyl-CoA molecule could then be taken up as a substrate by AzaD to form azanigerone B. To yield the carboxylic acid substituent in azanigerone A, the hydroxypropyl side chain of azanigerone B would need to undergo a C-C oxidative cleavage catalyzed by cytochrome P450 AzaI. AzaI is proposed to act on a vicinal diol that leads to a C-C bond scission either through an alkoxyradical intermediate or a peroxy complex. In the biosynthesis of azanigerone A, azanigerone B first undergoes hydroxylation at C10, possibly catalyzed by one of the two FAD-dependent monooxygenases encoded in the cluster, azaG or azaL, resulting in the vicinal diol azanigerone C. Oxidative cleavage of azanigerone C by azaI would yield the corresponding aldehyde derivative of azanigerone A. Finally, the dehydrogenase azaJ is proposed to convert the aldehyde functional group into the carboxylic acid, completing the conversion from azanigerone B to azanigerone A. Alternatively, the oxidation of aldehyde to carboxylic acid may be catalyzed by the same P450 enzyme azaI via consecutive oxidation or by endogenous alcohol dehydrogenase. This Aspergillus niger (strain ATCC 1015 / CBS 113.46 / FGSC A1144 / LSHB Ac4 / NCTC 3858a / NRRL 328 / USDA 3528.7) protein is FAD-linked oxidoreductase azaL.